The sequence spans 421 residues: Testin (421 aa).

The PET domain maps to 92–199; sequence MILTNPVAAK…GDVKLPCEMD (108 aa). Positions 133–164 are disordered; it reads EKQPVAGSEGAQYRKKQLAKQLPAHDQDPSKC. The segment covering 155-164 has biased composition (basic and acidic residues); that stretch reads PAHDQDPSKC. 3 consecutive LIM zinc-binding domains span residues 234–297, 299–359, and 362–421; these read YFCY…CDSE, PRCA…NHAV, and QGCH…KMMS.

Belongs to the prickle / espinas / testin family. As to quaternary structure, interacts via LIM domain 1 with ZYX. Interacts (via LIM domain 3) with ENAH and VASP. Interacts with ALKBH4, talin, actin, alpha-actinin, GRIP1 and PXN. Interacts (via LIM domain 2) with ACTL7A (via N-terminus). Heterodimer with ACTL7A; the heterodimer interacts with ENAH to form a heterotrimer.

The protein localises to the cytoplasm. Its subcellular location is the cell junction. It localises to the focal adhesion. Scaffold protein that may play a role in cell adhesion, cell spreading and in the reorganization of the actin cytoskeleton. Plays a role in the regulation of cell proliferation. May act as a tumor suppressor. This chain is Testin (TES), found in Plecturocebus moloch (Dusky titi monkey).